Consider the following 395-residue polypeptide: Ribosomal RNA large subunit methyltransferase G (395 aa).

Belongs to the methyltransferase superfamily. RlmG family.

It is found in the cytoplasm. The enzyme catalyses guanosine(1835) in 23S rRNA + S-adenosyl-L-methionine = N(2)-methylguanosine(1835) in 23S rRNA + S-adenosyl-L-homocysteine + H(+). Its function is as follows. Specifically methylates the guanine in position 1835 (m2G1835) of 23S rRNA. The protein is Ribosomal RNA large subunit methyltransferase G of Yersinia pseudotuberculosis serotype O:1b (strain IP 31758).